The chain runs to 50 residues: MPREIIQLQCGDCKDKNYSTTKNKKTTTGRLEFSKFCRKCRKHTSHKEVK.

This sequence belongs to the bacterial ribosomal protein bL33 family.

The protein is Large ribosomal subunit protein bL33 of Koribacter versatilis (strain Ellin345).